The sequence spans 272 residues: Single-strand selective monofunctional uracil DNA glycosylase (272 aa).

The segment at Met-1–Arg-27 is disordered. Substrate is bound by residues Met-86, Phe-100, and Asn-165. Residues Ser-175 to Arg-189 form a DNA-binding region. Substrate is bound at residue His-241.

This sequence belongs to the uracil-DNA glycosylase (UDG) superfamily. SMUG1 family.

The protein localises to the nucleus. Its function is as follows. Recognizes base lesions in the genome and initiates base excision DNA repair. Acts as a monofunctional DNA glycosylase specific for uracil (U) residues in DNA with a preference for single-stranded DNA substrates. The activity is greater toward mismatches (U/G) compared to matches (U/A). Excises uracil (U), 5-formyluracil (fU) and uracil derivatives bearing an oxidized group at C5 [5-hydroxyuracil (hoU) and 5-hydroxymethyluracil (hmU)] in ssDNA and dsDNA, but not analogous cytosine derivatives (5-hydroxycytosine and 5-formylcytosine), nor other oxidized bases. The activity is damage-specific and salt-dependent. The substrate preference is the following: ssDNA &gt; dsDNA (G pair) = dsDNA (A pair) at low salt concentration, and dsDNA (G pair) &gt; dsDNA (A pair) &gt; ssDNA at high salt concentration. This is Single-strand selective monofunctional uracil DNA glycosylase (SMUG1) from Bos taurus (Bovine).